Consider the following 316-residue polypeptide: Cytochrome c biogenesis protein CcsA (316 aa).

The next 8 membrane-spanning stretches (helical) occupy residues 19–39, 47–67, 77–97, 106–126, 151–171, 224–244, 258–275, and 285–305; these read VLTLGSLAFVLILISLPFSFW, SSIVRILIASANILLAIQLVF, ISNLYESLCFLTWGLTFIQLL, LIQAALTPISLLSIAFASFVL, VIMCSYAALLIGSLLSLVVLL, TITFGFLLLTFGLISGAVWAN, TWAFISWLIYAAYLHTRL, and AIIAIIGLFIILICYIGVNFL.

The protein belongs to the CcmF/CycK/Ccl1/NrfE/CcsA family. As to quaternary structure, may interact with ccs1.

Its subcellular location is the cellular thylakoid membrane. Functionally, required during biogenesis of c-type cytochromes (cytochrome c6 and cytochrome f) at the step of heme attachment. The protein is Cytochrome c biogenesis protein CcsA of Prochlorococcus marinus (strain SARG / CCMP1375 / SS120).